Consider the following 427-residue polypeptide: Inward rectifier potassium channel 2 (427 aa).

Topologically, residues 1–81 (MGSVRTNRYS…IFTTCVDIRW (81 aa)) are cytoplasmic. An S-nitrosocysteine modification is found at C76. The chain crosses the membrane as a helical span at residues 82–106 (RWMLVIFCLAFVLSWLFFGCVFWLI). The Extracellular segment spans residues 107–128 (ALLHGDLDASKESKACVSEVNS). Positions 129-140 (FTAAFLFSIETQ) form an intramembrane region, helical; Pore-forming. Positions 141-147 (TTIGYGF) form an intramembrane region, pore-forming. Positions 142–147 (TIGYGF) match the Selectivity filter motif. Over 148-156 (RCVTDECPV) the chain is Extracellular. Residues 157–178 (AVFMVVFQSIVGCIIDAFIIGA) traverse the membrane as a helical segment. The Cytoplasmic segment spans residues 179-427 (VMAKMAKPKK…PRPLRRESEI (249 aa)). A polyphosphoinositide (PIP2)-binding region spans residues 181–208 (AKMAKPKKRNETLVFSHNAVIAMRDGKL). Positions 384-427 (SKEEDDSENGVPESTSTDTPPDLDLHNQASVPLEPRPLRRESEI) are disordered. The PDZ-binding motif lies at 425-427 (SEI).

The protein belongs to the inward rectifier-type potassium channel (TC 1.A.2.1) family. KCNJ2 subfamily. As to quaternary structure, homotetramer. Homomultimeric and heteromultimeric association with KCNJ4/Kir2.3. Can form heteromeric channels with Kir2.6/KCNJ18. Associates, via its PDZ-recognition domain, with a complex containing LIN7A, LIN7B, LIN7C, DLG1, CASK and APBA1. S-nitrosylation increases the open probability and inward rectifying currents.

Its subcellular location is the cell membrane. The protein localises to the sarcolemma. The protein resides in the T-tubule. The catalysed reaction is K(+)(in) = K(+)(out). Activated by phosphatidylinositol 4,5 biphosphate (PtdIns(4,5)P2). Functionally, inward rectifier potassium channels are characterized by a greater tendency to allow potassium to flow into the cell rather than out of it. Their voltage dependence is regulated by the concentration of extracellular potassium; as external potassium is raised, the voltage range of the channel opening shifts to more positive voltages. The inward rectification is mainly due to the blockage of outward current by internal magnesium. Blocked by external barium or cesium. Probably participates in establishing action potential waveform and excitability of neuronal and muscle tissues. The protein is Inward rectifier potassium channel 2 (KCNJ2) of Canis lupus familiaris (Dog).